The primary structure comprises 500 residues: Pyruvate kinase 1 (500 aa).

An N-acetylserine modification is found at serine 2. Phosphoserine occurs at positions 9 and 16. Threonine 31 carries the post-translational modification Phosphothreonine. Arginine 49 serves as a coordination point for substrate. The K(+) site is built by asparagine 51 and serine 53. Residue 51-54 (NFSH) participates in ATP binding. Serine 70 carries the phosphoserine modification. Residues aspartate 84 and threonine 85 each coordinate K(+). Arginine 91 is an ATP binding site. Glycyl lysine isopeptide (Lys-Gly) (interchain with G-Cter in URM1) cross-links involve residues lysine 119, lysine 124, lysine 161, lysine 164, and lysine 166. Lysine 177 serves as a coordination point for ATP. Phosphothreonine is present on threonine 184. Lysine 204 is covalently cross-linked (Glycyl lysine isopeptide (Lys-Gly) (interchain with G-Cter in ubiquitin)). Phosphoserine is present on serine 213. Lysine 240 is a binding site for substrate. Glutamate 242 provides a ligand contact to Mn(2+). A Glycyl lysine isopeptide (Lys-Gly) (interchain with G-Cter in ubiquitin) cross-link involves residue lysine 255. Positions 265 and 266 each coordinate substrate. Aspartate 266 provides a ligand contact to Mn(2+). Lysine 292 is covalently cross-linked (Glycyl lysine isopeptide (Lys-Gly) (interchain with G-Cter in URM1)). Threonine 298 is a binding site for substrate. Serine 316 is subject to Phosphoserine. Residue lysine 394 forms a Glycyl lysine isopeptide (Lys-Gly) (interchain with G-Cter in URM1) linkage. 402–407 (STSGTT) is a beta-D-fructose 1,6-bisphosphate binding site. The residue at position 418 (cysteine 418) is a Cysteine persulfide. A Glycyl lysine isopeptide (Lys-Gly) (interchain with G-Cter in ubiquitin); alternate cross-link involves residue lysine 446. Residue lysine 446 forms a Glycyl lysine isopeptide (Lys-Gly) (interchain with G-Cter in URM1); alternate linkage. Serine 450 bears the Phosphoserine mark. Tryptophan 452 and arginine 459 together coordinate beta-D-fructose 1,6-bisphosphate. Threonine 478 bears the Phosphothreonine mark. Glycine 484 contacts beta-D-fructose 1,6-bisphosphate.

The protein belongs to the pyruvate kinase family. In terms of assembly, homotetramer. Requires Mg(2+) as cofactor. The cofactor is K(+). Conjugated to URM1, a ubiquitin-like protein, in response to oxidative stresses. The attachment of URM1 to lysine residues exclusively depends on the presence of a peroxidatic cysteine in the target protein, with low specificity for the particular residue, motif, or structural context at which urmylation can occur. The URM1-conjugation reaction is mechanistically and directly coupled to the process of cysteine persulfidation, transfering the sulfur atom of the URM1 thiocarboxyl group to redox-active cysteine residues in the target protein if it is exposed to oxidative conditions. In terms of processing, persulfidated on specific redox-active cysteine residues. Persulfidation (also called protein S-sulfhydration) may provide a molecular mechanism that enables cells to protect vulnerable cysteine residues from reactive oxygen species (ROS) under stress conditions.

The enzyme catalyses pyruvate + ATP = phosphoenolpyruvate + ADP + H(+). The protein operates within carbohydrate degradation; glycolysis; pyruvate from D-glyceraldehyde 3-phosphate: step 5/5. The activity is regulated by glucose levels. Activated by fructose-1,6-bisphosphate. The protein is Pyruvate kinase 1 (CDC19) of Saccharomyces cerevisiae (strain ATCC 204508 / S288c) (Baker's yeast).